A 667-amino-acid chain; its full sequence is UvrABC system protein B (667 aa).

The region spanning 31 to 414 is the Helicase ATP-binding domain; that stretch reads AGIESGEKEQ…EMDRTKHVVQ (384 aa). 44–51 contacts ATP; the sequence is GATGTGKT. The Beta-hairpin motif lies at 97 to 120; the sequence is YYDYYQPEAYVPSSDTYIEKDSAI. The Helicase C-terminal domain occupies 435 to 597; it reads QIDDLVGEIN…ITPHTIKKAI (163 aa). Residues 630–665 form the UVR domain; it reads LDMISKLEEQMKTAAKKLDFEQAATLRDTVMELKAQ.

This sequence belongs to the UvrB family. Forms a heterotetramer with UvrA during the search for lesions. Interacts with UvrC in an incision complex.

The protein resides in the cytoplasm. Functionally, the UvrABC repair system catalyzes the recognition and processing of DNA lesions. A damage recognition complex composed of 2 UvrA and 2 UvrB subunits scans DNA for abnormalities. Upon binding of the UvrA(2)B(2) complex to a putative damaged site, the DNA wraps around one UvrB monomer. DNA wrap is dependent on ATP binding by UvrB and probably causes local melting of the DNA helix, facilitating insertion of UvrB beta-hairpin between the DNA strands. Then UvrB probes one DNA strand for the presence of a lesion. If a lesion is found the UvrA subunits dissociate and the UvrB-DNA preincision complex is formed. This complex is subsequently bound by UvrC and the second UvrB is released. If no lesion is found, the DNA wraps around the other UvrB subunit that will check the other stand for damage. In Lactiplantibacillus plantarum (strain ATCC BAA-793 / NCIMB 8826 / WCFS1) (Lactobacillus plantarum), this protein is UvrABC system protein B.